A 260-amino-acid chain; its full sequence is MPEDYWSAKDYQRNASFVPKLTKDIVKRINLSSSDELLDLGCGDGVLTNELVSQCRRVVGIDASPDMIKAARELGLNAYVIPGEKLLDASEIPSESFDVVFSNAALHWIMRQPKNRPIVMKGVSRVLRTKGRFVAECGAFGNVSEVVGSIYSILLALGATKEQIDQANPWFFGSEDDYTRMLEEAGFHVEYVENISRPTLLNKDVREWLDTFAQHFYHAFPQWKDIIRETVYNALLVTDCRSDGKWFLQYRRLRFVAHKE.

Belongs to the methyltransferase superfamily.

Its subcellular location is the cytoplasm. The protein localises to the nucleus. Its function is as follows. Probable methyltransferase. This is an uncharacterized protein from Schizosaccharomyces pombe (strain 972 / ATCC 24843) (Fission yeast).